A 247-amino-acid chain; its full sequence is Cell division protein ZapD (247 aa).

The protein belongs to the ZapD family. In terms of assembly, interacts with FtsZ.

It is found in the cytoplasm. Its function is as follows. Cell division factor that enhances FtsZ-ring assembly. Directly interacts with FtsZ and promotes bundling of FtsZ protofilaments, with a reduction in FtsZ GTPase activity. This chain is Cell division protein ZapD, found in Escherichia coli O157:H7.